A 283-amino-acid polypeptide reads, in one-letter code: Bifunctional protein FolD (283 aa).

Residues 166-168 (GAS) and Ile-232 each bind NADP(+).

This sequence belongs to the tetrahydrofolate dehydrogenase/cyclohydrolase family. In terms of assembly, homodimer.

The catalysed reaction is (6R)-5,10-methylene-5,6,7,8-tetrahydrofolate + NADP(+) = (6R)-5,10-methenyltetrahydrofolate + NADPH. It carries out the reaction (6R)-5,10-methenyltetrahydrofolate + H2O = (6R)-10-formyltetrahydrofolate + H(+). The protein operates within one-carbon metabolism; tetrahydrofolate interconversion. Catalyzes the oxidation of 5,10-methylenetetrahydrofolate to 5,10-methenyltetrahydrofolate and then the hydrolysis of 5,10-methenyltetrahydrofolate to 10-formyltetrahydrofolate. The sequence is that of Bifunctional protein FolD from Hamiltonella defensa subsp. Acyrthosiphon pisum (strain 5AT).